A 190-amino-acid chain; its full sequence is Anthranilate synthase component II (190 aa).

Positions 1–190 (MILIIDNYDS…ENFCTGIAKA (190 aa)) constitute a Glutamine amidotransferase type-1 domain. An L-glutamine-binding site is contributed by 51-53 (GPG). Cys-76 (nucleophile; for GATase activity) is an active-site residue. L-glutamine contacts are provided by residues Gln-80 and 126 to 127 (SL). Active-site residues include His-167 and Glu-169.

In terms of assembly, tetramer of two components I and two components II.

The catalysed reaction is chorismate + L-glutamine = anthranilate + pyruvate + L-glutamate + H(+). Its pathway is amino-acid biosynthesis; L-tryptophan biosynthesis; L-tryptophan from chorismate: step 1/5. In Haloarcula marismortui (strain ATCC 43049 / DSM 3752 / JCM 8966 / VKM B-1809) (Halobacterium marismortui), this protein is Anthranilate synthase component II (trpG2).